Reading from the N-terminus, the 255-residue chain is Large ribosomal subunit protein uL4 (255 aa).

Belongs to the universal ribosomal protein uL4 family. In terms of assembly, part of the 50S ribosomal subunit.

One of the primary rRNA binding proteins, this protein initially binds near the 5'-end of the 23S rRNA. It is important during the early stages of 50S assembly. It makes multiple contacts with different domains of the 23S rRNA in the assembled 50S subunit and ribosome. Its function is as follows. Forms part of the polypeptide exit tunnel. The polypeptide is Large ribosomal subunit protein uL4 (Thermococcus kodakarensis (strain ATCC BAA-918 / JCM 12380 / KOD1) (Pyrococcus kodakaraensis (strain KOD1))).